A 431-amino-acid polypeptide reads, in one-letter code: Glucose-1-phosphate adenylyltransferase (431 aa).

A beta-D-fructose 1,6-bisphosphate-binding site is contributed by K39. Positions 40, 46, and 52 each coordinate AMP. Alpha-D-glucose 1-phosphate is bound at residue Y114. AMP is bound at residue R130. Residues G179, E194 to K195, and S212 each bind alpha-D-glucose 1-phosphate. Residues E370 and R386 each contribute to the AMP site. Beta-D-fructose 1,6-bisphosphate-binding positions include R419–R423 and Q429–R431.

The protein belongs to the bacterial/plant glucose-1-phosphate adenylyltransferase family. As to quaternary structure, homotetramer.

The enzyme catalyses alpha-D-glucose 1-phosphate + ATP + H(+) = ADP-alpha-D-glucose + diphosphate. The protein operates within glycan biosynthesis; glycogen biosynthesis. Allosterically activated by fructose-1,6-bisphosphate (F16BP) and inhibited by AMP. Involved in the biosynthesis of ADP-glucose, a building block required for the elongation reactions to produce glycogen. Catalyzes the reaction between ATP and alpha-D-glucose 1-phosphate (G1P) to produce pyrophosphate and ADP-Glc. This chain is Glucose-1-phosphate adenylyltransferase, found in Escherichia coli O45:K1 (strain S88 / ExPEC).